The chain runs to 292 residues: tRNA pseudouridine synthase B (292 aa).

Asp-40 acts as the Nucleophile in catalysis.

This sequence belongs to the pseudouridine synthase TruB family. Type 1 subfamily.

It carries out the reaction uridine(55) in tRNA = pseudouridine(55) in tRNA. In terms of biological role, responsible for synthesis of pseudouridine from uracil-55 in the psi GC loop of transfer RNAs. This is tRNA pseudouridine synthase B from Mycoplasma mycoides subsp. mycoides SC (strain CCUG 32753 / NCTC 10114 / PG1).